The sequence spans 988 residues: MSSSITMSEPRLNWDVTPKNGLKAFFSPENYKDHSMAPSLKELYILSNRRIGENLSVSASSVENEPAVSSATQAKEKVGMILLPKPRVPYPRFSRFSQREQRTYVDLLAKYAKLPSSSKTVGTNTNEYLQYLDMKKHVNEEVNEFLKFLQNSAKKCAQDYNMLSDEARLFTEQLLRACIEQVKKYPEFYTLHEVTSLMGFFPFKTEMGLKLEKTLLVLGSAKFVKTAFPSMPVKLQLSKEDMSSIETPQQKAEVMHCDISKDPNAEKLVSRYHPQIALTSQALFTLLNNHGPSYKEQWEIPVCVEMIAVEGSKPVKVIYINSPLPRKQMTMRERNQIFHEVPLKHIISKNTSVPVSAVFMDKPEEYTSEVDMPTEAGECRKIETLENLDMDFDGDVTELETFGVTTTSPPRSPSSESDSSAPLMTDVHAVPKIAAVPLAPATPVAPTMPVAPATPVTPTMPMAPATPEASATPNITDDSRSLCQILMKQLQKEKQLFSGVEGGPEGCKNKDDQGLEPCGEEVPSANAKSLTQDNEVHRTEGISKESDVGVLCTNDERQGGQGNANNPNNTATASEAAESEKGIPCGSDTDEDCLIIDTESRSCDGKTADLGSRPNSSAQASAGNQATTTVSEESCVLKKPIKRVYKKFDPVGEILKMQDELLKPVSRKVPELPLTNSEESKQPPASEQPSAALDAAPWPKSSWPSAFQKPKGRLPYELQDYVEDTSEYIAPQEGNFVYKLFSLQDLLLLVRCSIQRVETRPRSKKRKKIRRQFPVYVLPKVEYQGCYGVEALTESELCRFWTESLLHSNCSFYVGHIDAFTSKLFMLEEIASEELKEKLAALKISSLFNILQHILKKLCSLQEGSYLLSHAAEDSSLLIYKTSDGKVTRTAYNLHKAHCDLPGVPSSLSVPWVPLDPSYLLPYHIHHGRVPCTFPPKPLRPAAQAKVGGTRMPTRNHRNPVSMETKSSCLPVQQVENEGVARNKRKIM.

Serine 322 carries the post-translational modification Phosphoserine. Disordered regions lie at residues 402–422 and 500–587; these read FGVTTTSPPRSPSSESDSSAP and VEGG…PCGS. Residues 413 to 422 are compositionally biased toward low complexity; that stretch reads PSSESDSSAP. A compositionally biased stretch (basic and acidic residues) spans 534 to 547; sequence NEVHRTEGISKESD. Low complexity predominate over residues 563–576; that stretch reads NANNPNNTATASEA. Serine 587 is modified (phosphoserine). Threonine 589 bears the Phosphothreonine mark. 3 disordered regions span residues 604–633, 673–706, and 942–968; these read DGKTADLGSRPNSSAQASAGNQATTTVSEE, PLTNSEESKQPPASEQPSAALDAAPWPKSSWPSA, and AAQAKVGGTRMPTRNHRNPVSMETKSS. Over residues 615 to 629 the composition is skewed to low complexity; sequence NSSAQASAGNQATTT.

Belongs to the ICE2 family. In terms of assembly, component of the little elongation complex (LEC), at least composed of ELL (ELL, ELL2 or ELL3), ZC3H8, ICE1 and ICE2. Interacts with ICE1 (via C-terminus domain). Interacts with ELL. Expressed in brain, kidney, liver and testis.

It is found in the nucleus. Its function is as follows. Component of the little elongation complex (LEC), a complex required to regulate small nuclear RNA (snRNA) gene transcription by RNA polymerase II and III. The sequence is that of Little elongation complex subunit 2 (Ice2) from Mus musculus (Mouse).